Here is a 106-residue protein sequence, read N- to C-terminus: Insulin-like peptide 04 (106 aa).

The signal sequence occupies residues 1–22 (MPRTFLVVLIYILAGFLCSTSA). The propeptide occupies 23–37 (LRKVNEASGIKTDGS). Cystine bridges form between Cys-45–Cys-50, Cys-46–Cys-80, and Cys-59–Cys-68. Residues 86–106 (RRKRSLTVDKREAKKFIRQRR) constitute a propeptide, c peptide.

It belongs to the insulin family.

It is found in the secreted. Insulin decreases blood glucose concentration. May have evolved to activate insulin receptors (INSR) in vertebrates. Molecular docking studies reveals unique interaction with the human insulin receptor. In vivo, insulin-like peptide injection reduces blood glucose levels in two models of zebrafish diabetes (streptozotocin- and glucose-induced). Also shorter swimming distance of zebrafish larvae, an effect which is not observed with human insulin. The polypeptide is Insulin-like peptide 04 (Exaiptasia diaphana (Tropical sea anemone)).